The chain runs to 216 residues: Large ribosomal subunit protein uL1 (216 aa).

It belongs to the universal ribosomal protein uL1 family.

In Caenorhabditis elegans, this protein is Large ribosomal subunit protein uL1.